Consider the following 546-residue polypeptide: MKADNRNRTSVAIVGAGPNGAALANLLGLYGVDTVVVERAPQIVDFPRAVGIDDEALRLFQTAGVADELSRDIIQNVPLRMFNARGECFADVRPSVREFGWWRRNIFMQHLAERTLRDALARYPHVSLRTGEEVVGLEQDDAHVTLRVQGADGQHYALDADYVVAADGGRSPLREMLGIPLAGTTHPMKWVVVDVKNAGLDQPCTALNCDPRRPNVCIYLPFNYRRWEFLVFPHEDEQAIAQPESIRALIAPYVEDVERLEIVRARTYTHHSRVAERFVAGRIALVGDAAHLSPPWIGQGLNAGLRDVGNLAWKLAGIVHGRLNPGVLATYESERRAHAKAMIDLADTFGAMLMPTSRPVAFLRDRLLAAARFAPGLKDYVLQMRFKPMPSYTRGVVVTGASDASGAIGRMIVQPDVETADGVRRKLDDVLGPWFSIIGWQCDPQASLSDDERAFWTALGAKFVQIVRSRSGTCREQRIASAHGSECVEDVDNAMADWFDRHAGPLVVVRPDRYVAAQTDAVGIAGVTAAFRAFAPQQQAEAAHVC.

FAD is bound by residues Ser10 to Arg39 and Phe278 to Asp288.

This sequence belongs to the PheA/TfdB FAD monooxygenase family. FAD is required as a cofactor.

The enzyme catalyses 3-(3-hydroxyphenyl)propanoate + NADH + O2 + H(+) = 3-(2,3-dihydroxyphenyl)propanoate + NAD(+) + H2O. It carries out the reaction (2E)-3-(3-hydroxyphenyl)prop-2-enoate + NADH + O2 + H(+) = (2E)-3-(2,3-dihydroxyphenyl)prop-2-enoate + NAD(+) + H2O. It participates in aromatic compound metabolism; 3-phenylpropanoate degradation. Catalyzes the insertion of one atom of molecular oxygen into position 2 of the phenyl ring of 3-(3-hydroxyphenyl)propionate (3-HPP) and hydroxycinnamic acid (3HCI). This is 3-(3-hydroxy-phenyl)propionate/3-hydroxycinnamic acid hydroxylase 2 from Burkholderia vietnamiensis (strain G4 / LMG 22486) (Burkholderia cepacia (strain R1808)).